We begin with the raw amino-acid sequence, 155 residues long: Small ribosomal subunit protein uS7c (155 aa).

This sequence belongs to the universal ribosomal protein uS7 family. In terms of assembly, part of the 30S ribosomal subunit.

The protein localises to the plastid. Its subcellular location is the chloroplast. In terms of biological role, one of the primary rRNA binding proteins, it binds directly to 16S rRNA where it nucleates assembly of the head domain of the 30S subunit. In Cabomba caroliniana (Carolina fanwort), this protein is Small ribosomal subunit protein uS7c (rps7).